A 106-amino-acid chain; its full sequence is Urease subunit beta (106 aa).

The protein belongs to the urease beta subunit family. As to quaternary structure, heterotrimer of UreA (gamma), UreB (beta) and UreC (alpha) subunits. Three heterotrimers associate to form the active enzyme.

The protein localises to the cytoplasm. It carries out the reaction urea + 2 H2O + H(+) = hydrogencarbonate + 2 NH4(+). The protein operates within nitrogen metabolism; urea degradation; CO(2) and NH(3) from urea (urease route): step 1/1. The chain is Urease subunit beta from Prochlorococcus marinus (strain MIT 9215).